A 432-amino-acid polypeptide reads, in one-letter code: 3-phosphoshikimate 1-carboxyvinyltransferase (432 aa).

Residues lysine 21, serine 22, and arginine 26 each contribute to the 3-phosphoshikimate site. Lysine 21 is a binding site for phosphoenolpyruvate. Residues glycine 93 and arginine 121 each contribute to the phosphoenolpyruvate site. Residues serine 166, glutamine 168, aspartate 318, and lysine 345 each contribute to the 3-phosphoshikimate site. Position 168 (glutamine 168) interacts with phosphoenolpyruvate. The Proton acceptor role is filled by aspartate 318. Residues arginine 349 and arginine 391 each coordinate phosphoenolpyruvate.

The protein belongs to the EPSP synthase family. As to quaternary structure, monomer.

Its subcellular location is the cytoplasm. It catalyses the reaction 3-phosphoshikimate + phosphoenolpyruvate = 5-O-(1-carboxyvinyl)-3-phosphoshikimate + phosphate. Its pathway is metabolic intermediate biosynthesis; chorismate biosynthesis; chorismate from D-erythrose 4-phosphate and phosphoenolpyruvate: step 6/7. Its function is as follows. Catalyzes the transfer of the enolpyruvyl moiety of phosphoenolpyruvate (PEP) to the 5-hydroxyl of shikimate-3-phosphate (S3P) to produce enolpyruvyl shikimate-3-phosphate and inorganic phosphate. The chain is 3-phosphoshikimate 1-carboxyvinyltransferase from Persephonella marina (strain DSM 14350 / EX-H1).